The primary structure comprises 357 residues: Red-sensitive opsin (357 aa).

At 1-49 the chain is on the extracellular side; sequence MGDQWGDAVFAARRRGDDTTREAAFTYTNSNNTKDPFEGPNYHIAPRWV. An N-linked (GlcNAc...) asparagine glycan is attached at asparagine 31. A helical membrane pass occupies residues 50–74; it reads YNLATCWMFFVVVASTVTNGLVLVA. At 75–86 the chain is on the cytoplasmic side; sequence SAKFKKLRHPLN. Residues 87–112 traverse the membrane as a helical segment; the sequence is WILVNLAIADLLETLLASTISVCNQF. Residues 113–126 are Extracellular-facing; sequence FGYFILGHPMCVFE. Residues cysteine 123 and cysteine 200 are joined by a disulfide bond. The helical transmembrane segment at 127–146 threads the bilayer; sequence GFTVATCGIAGLWSLTVISW. Over 147–165 the chain is Cytoplasmic; it reads ERWVVVCKPFGNVKFDGKM. Residues 166 to 189 traverse the membrane as a helical segment; that stretch reads ATAGIVFTWVWSAVWCAPPIFGWS. The Extracellular segment spans residues 190-215; the sequence is RYWPHGLKTSCGPDVFSGSEDPGVQS. A helical transmembrane segment spans residues 216-243; the sequence is YMIVLMITCCFIPLGIIILCYIAVWWAI. The Cytoplasmic segment spans residues 244–265; sequence RTVAQQQKDSESTQKAEKEVSR. A helical transmembrane segment spans residues 266-289; that stretch reads MVVVMIMAYCFCWGPYTFFACFAA. Residues 290 to 297 are Extracellular-facing; the sequence is ANPGYAFH. A helical transmembrane segment spans residues 298–322; it reads PLAAAMPAYFAKSATIYNPVIYVFM. An N6-(retinylidene)lysine modification is found at lysine 309. At 323–357 the chain is on the cytoplasmic side; the sequence is NRQFRVCIMQLFGKKVDDGSEVSTSKTEVSSVAPA.

The protein belongs to the G-protein coupled receptor 1 family. Opsin subfamily. Post-translationally, phosphorylated on some or all of the serine and threonine residues present in the C-terminal region. As to expression, the color pigments are found in the cone photoreceptor cells.

Its subcellular location is the membrane. Its function is as follows. Visual pigments are the light-absorbing molecules that mediate vision. They consist of an apoprotein, opsin, covalently linked to cis-retinal. This is Red-sensitive opsin (R007) from Psalidodon fasciatus (Banded astyanax).